A 377-amino-acid polypeptide reads, in one-letter code: Presenilin-associated rhomboid-like protein, mitochondrial (377 aa).

A mitochondrion-targeting transit peptide spans 1–52; it reads MAWRGWAQRGWGCGQAWTLPVCGGSYEELTAALAPSRLLRRRFNFFIQQKCG. At 53–99 the chain is on the mitochondrial matrix side; it reads FRKAPRKVEPRRSDTSSEAYKRSALIPPVEETAFYPSPYPIRTLVKP. Ser-65 and Ser-68 each carry phosphoserine. The helical transmembrane segment at 100–119 threads the bilayer; the sequence is LFFTVGFTGCAFGSAAIWQY. Over 120-165 the chain is Mitochondrial intermembrane; the sequence is ESLKSKVQSYFDGIKADWLDSIRPQKEGDFRKEINKWWNNLSDGQR. A helical membrane pass occupies residues 166-185; that stretch reads TVTGIIAANVFVFCLWRVPS. The Mitochondrial matrix portion of the chain corresponds to 186 to 205; the sequence is LQRTMIRYFTSNPASKVLCS. Residues 206–228 traverse the membrane as a helical segment; that stretch reads PMLLSTFSHFSLFHMAANMYVLW. The Mitochondrial intermembrane segment spans residues 229 to 242; it reads SFSSSIVNILGQEQ. The chain crosses the membrane as a helical span at residues 243–260; sequence FMAVYLSAGVISTFVSYV. The Mitochondrial matrix portion of the chain corresponds to 261–270; that stretch reads CKVATGRYGP. Residues 271-287 form a helical membrane-spanning segment; it reads SLGASGAIMTVLAAVCT. Ser-275 functions as the Nucleophile in the catalytic mechanism. Over 288–293 the chain is Mitochondrial intermembrane; it reads KIPEGR. Residues 294-316 traverse the membrane as a helical segment; that stretch reads LAIIFLPMFTFTAGNALKAIIAM. At 317 to 330 the chain is on the mitochondrial matrix side; it reads DTAGMILGWKFFDH. A helical transmembrane segment spans residues 331–352; that stretch reads AAHLGGALFGIWYITYGHELIW. His-333 is an active-site residue. Residues 353–377 lie on the Mitochondrial intermembrane side of the membrane; that stretch reads KNREPLVKIWHEMRTNSPKKGGGSK.

The protein belongs to the peptidase S54 family. In terms of assembly, interacts with PSEN1 and PSEN2. Binds OPA1. P-beta is proteolytically processed (beta-cleavage) in a PARL-dependent manner.

It is found in the mitochondrion inner membrane. It localises to the nucleus. It catalyses the reaction Cleaves type-1 transmembrane domains using a catalytic dyad composed of serine and histidine that are contributed by different transmembrane domains.. Required for the control of apoptosis during postnatal growth. Essential for proteolytic processing of an antiapoptotic form of OPA1 which prevents the release of mitochondrial cytochrome c in response to intrinsic apoptotic signals. Required for the maturation of PINK1 into its 52kDa mature form after its cleavage by mitochondrial-processing peptidase (MPP). Promotes cleavage of serine/threonine-protein phosphatase PGAM5 in damaged mitochondria in response to loss of mitochondrial membrane potential. Mediates differential cleavage of PINK1 and PGAM5 depending on the health status of mitochondria, disassociating from PINK1 and associating with PGAM5 in response to mitochondrial membrane potential loss. Required for processing of CLPB into a form with higher protein disaggregase activity by removing an autoinhibitory N-terminal peptide. Promotes processing of DIABLO/SMAC in the mitochondrion which is required for DIABLO apoptotic activity. Also required for cleavage of STARD7 and TTC19. Promotes changes in mitochondria morphology regulated by phosphorylation of P-beta domain. This is Presenilin-associated rhomboid-like protein, mitochondrial (PARL) from Bos taurus (Bovine).